The chain runs to 327 residues: Meiotic coiled-coil protein 6 (327 aa).

Positions 66 to 188 (DAFERDSTQR…TETKEMNKIK (123 aa)) form a coiled coil. Residues 175 to 199 (RRMETETKEMNKIKPKNDSESDRFK) show a composition bias toward basic and acidic residues. A disordered region spans residues 175–234 (RRMETETKEMNKIKPKNDSESDRFKRNSQSLSQQSPLLDVHSPDNSNHRTMLNINNSSPI). Residues 202-212 (SQSLSQQSPLL) are compositionally biased toward low complexity. The segment covering 217–232 (PDNSNHRTMLNINNSS) has biased composition (polar residues). Positions 243-297 (NEVKNRISRLQKTFADLENQHHSFQQICQTLRKRLENDSSTTKQRLSKLEEIIRN) form a coiled coil.

As to quaternary structure, interacts with alp4, kms1 and mbo1.

It is found in the nucleus. The protein resides in the cytoplasm. It localises to the cytoskeleton. Its subcellular location is the microtubule organizing center. The protein localises to the spindle pole body. Functionally, has a role in meiotic nuclear oscillation and recombination. Required to remodel astral microtubules into the 'horsetail' astral array maintaining the 'horsetail' nuclear movement. Promotes homologous paring of chromosomes during this movement. The polypeptide is Meiotic coiled-coil protein 6 (mcp6) (Schizosaccharomyces pombe (strain 972 / ATCC 24843) (Fission yeast)).